The chain runs to 426 residues: Enolase (426 aa).

A (2R)-2-phosphoglycerate-binding site is contributed by Gln163. Residue Glu205 is the Proton donor of the active site. The Mg(2+) site is built by Asp242, Glu285, and Asp312. (2R)-2-phosphoglycerate contacts are provided by Lys337, Arg366, Ser367, and Lys388. The active-site Proton acceptor is Lys337.

This sequence belongs to the enolase family. As to quaternary structure, component of the RNA degradosome, a multiprotein complex involved in RNA processing and mRNA degradation. Mg(2+) serves as cofactor.

The protein localises to the cytoplasm. Its subcellular location is the secreted. It is found in the cell surface. The enzyme catalyses (2R)-2-phosphoglycerate = phosphoenolpyruvate + H2O. It participates in carbohydrate degradation; glycolysis; pyruvate from D-glyceraldehyde 3-phosphate: step 4/5. Functionally, catalyzes the reversible conversion of 2-phosphoglycerate (2-PG) into phosphoenolpyruvate (PEP). It is essential for the degradation of carbohydrates via glycolysis. In Nitrosococcus oceani (strain ATCC 19707 / BCRC 17464 / JCM 30415 / NCIMB 11848 / C-107), this protein is Enolase.